A 584-amino-acid chain; its full sequence is Aspartate--tRNA(Asp/Asn) ligase (584 aa).

Glu173 lines the L-aspartate pocket. Residues 197-200 form an aspartate region; sequence QLFK. Arg219 is an L-aspartate binding site. Residues 219 to 221 and Gln228 contribute to the ATP site; that span reads RDE. An L-aspartate-binding site is contributed by His447. Position 477 (Glu477) interacts with ATP. Arg484 serves as a coordination point for L-aspartate. 529-532 is a binding site for ATP; the sequence is GFDR.

Belongs to the class-II aminoacyl-tRNA synthetase family. Type 1 subfamily. Homodimer.

The protein resides in the cytoplasm. It catalyses the reaction tRNA(Asx) + L-aspartate + ATP = L-aspartyl-tRNA(Asx) + AMP + diphosphate. Its function is as follows. Aspartyl-tRNA synthetase with relaxed tRNA specificity since it is able to aspartylate not only its cognate tRNA(Asp) but also tRNA(Asn). Reaction proceeds in two steps: L-aspartate is first activated by ATP to form Asp-AMP and then transferred to the acceptor end of tRNA(Asp/Asn). In Campylobacter hominis (strain ATCC BAA-381 / DSM 21671 / CCUG 45161 / LMG 19568 / NCTC 13146 / CH001A), this protein is Aspartate--tRNA(Asp/Asn) ligase.